The chain runs to 348 residues: Acetylesterase (348 aa).

Residues 1-16 (MRSILVIPSFVAVLNA) form the signal peptide. Residues Asn64, Asn165, Asn218, Asn223, and Asn297 are each glycosylated (N-linked (GlcNAc...) asparagine).

It belongs to the carbohydrate esterase CE16 family. N-glycosylated.

The protein localises to the secreted. It catalyses the reaction an acetyl ester + H2O = an aliphatic alcohol + acetate + H(+). In terms of biological role, acetylesterase that acts as an exo-deacetylase. Shows activity towards naphtyl acetate, triacetin, as well as towards glucose- and xylose acetates. Liberates acetic acid from xylo-oligomers. The protein is Acetylesterase of Hypocrea jecorina (Trichoderma reesei).